The primary structure comprises 320 residues: Bifunctional ligase/repressor BirA (320 aa).

The H-T-H motif DNA-binding region spans 22–41 (GEQLGERLGMSRAAINKHIQ). One can recognise a BPL/LPL catalytic domain in the interval 66–254 (LLDADRIHSQ…KLRAALELFE (189 aa)). Residues 89 to 91 (STN), Q112, 116 to 118 (RGR), and K183 contribute to the biotin site.

It belongs to the biotin--protein ligase family.

The enzyme catalyses biotin + L-lysyl-[protein] + ATP = N(6)-biotinyl-L-lysyl-[protein] + AMP + diphosphate + H(+). Its function is as follows. Acts both as a biotin--[acetyl-CoA-carboxylase] ligase and a biotin-operon repressor. In the presence of ATP, BirA activates biotin to form the BirA-biotinyl-5'-adenylate (BirA-bio-5'-AMP or holoBirA) complex. HoloBirA can either transfer the biotinyl moiety to the biotin carboxyl carrier protein (BCCP) subunit of acetyl-CoA carboxylase, or bind to the biotin operator site and inhibit transcription of the operon. The chain is Bifunctional ligase/repressor BirA from Salmonella typhimurium (strain LT2 / SGSC1412 / ATCC 700720).